Here is a 249-residue protein sequence, read N- to C-terminus: Vitamin B12 import ATP-binding protein BtuD (249 aa).

Positions 1–233 (MSIVMQLQDV…PNLAQAYGMN (233 aa)) constitute an ABC transporter domain. An ATP-binding site is contributed by 33 to 40 (GPNGAGKS).

This sequence belongs to the ABC transporter superfamily. Vitamin B12 importer (TC 3.A.1.13.1) family. In terms of assembly, the complex is composed of two ATP-binding proteins (BtuD), two transmembrane proteins (BtuC) and a solute-binding protein (BtuF).

The protein localises to the cell inner membrane. The enzyme catalyses an R-cob(III)alamin(out) + ATP + H2O = an R-cob(III)alamin(in) + ADP + phosphate + H(+). In terms of biological role, part of the ABC transporter complex BtuCDF involved in vitamin B12 import. Responsible for energy coupling to the transport system. This Escherichia coli (strain K12 / DH10B) protein is Vitamin B12 import ATP-binding protein BtuD.